Here is a 3461-residue protein sequence, read N- to C-terminus: Abnormal spindle-like microcephaly-associated protein homolog (3461 aa).

A disordered region spans residues 1–30 (MATRRAGRSWEVSPTERRPSARPRNSAAEE). A phosphoserine mark is found at Ser279, Ser282, Ser367, Ser392, Ser426, and Ser606. The region spanning 921 to 1057 (KTSKEILLAF…LLWKIAFAFQ (137 aa)) is the Calponin-homology (CH) 1 domain. The stretch at 1058–1077 (VDISLNLDQLKEEIDFLKHT) forms a coiled coil. A Phosphoserine modification is found at Ser1104. The 152-residue stretch at 1111–1262 (SESIKLLMDW…YLSFLCARLL (152 aa)) folds into the Calponin-homology (CH) 2 domain. IQ domains follow at residues 1267-1296 (ETRA…RDKA), 1348-1379 (QNKS…VILQ), 1488-1517 (LRSC…AILT), 1511-1540 (RREA…QKRA), 1538-1569 (KRAA…VFQS), 1583-1614 (LKKI…LIIQ), 1633-1662 (TRSA…SIIK), 1656-1685 (ILTS…ATVK), 1729-1758 (MRES…AAVS), 1752-1783 (QRKA…VVIQ), 1775-1804 (MYKA…QVKR), 1802-1831 (VKRA…AALK), 1825-1854 (QSIA…STIK), 1875-1904 (TKAA…AAVR), 1898-1929 (ELQA…LVIQ), 1948-1979 (LRNA…VIIQ), 1971-2002 (QHKC…RLIQ), 2021-2050 (TKAA…AAVA), 2044-2075 (YNKA…VLIQ), 2094-2125 (LKKT…TFIK), 2117-2148 (MHTA…VLIQ), 2167-2198 (ILKA…IRIQ), 2190-2219 (MQNA…VTQT), 2240-2271 (LRHS…TLIQ), 2313-2344 (LQKA…TVIQ), 2336-2367 (MHRA…VVIQ), 2386-2417 (QRHS…VLIQ), 2409-2440 (MHSS…VFVQ), 2459-2490 (VQKA…ALIQ), 2532-2563 (QRHS…IIIQ), 2666-2697 (RTQA…TLIQ), 2689-2720 (MHLA…VLIQ), 2739-2768 (LQKS…AKMA), 2837-2866 (QKHA…AAVT), 2860-2891 (QKRA…SVLQ), 2910-2939 (VRSS…STIK), 2933-2964 (IKDS…KIQA), 2955-2986 (KVKA…KVIQ), 3030-3059 (RHQA…AALT), 3080-3111 (LKKS…RLLH), 3182-3211 (QNRA…GITK), and 3205-3236 (INNG…IRLS).

The protein resides in the cytoplasm. The protein localises to the cytoskeleton. It is found in the spindle. Its subcellular location is the nucleus. Its function is as follows. Probable role in mitotic spindle regulation and coordination of mitotic processes. May have a preferential role in regulating neurogenesis. In Felis catus (Cat), this protein is Abnormal spindle-like microcephaly-associated protein homolog (ASPM).